The primary structure comprises 338 residues: Nicotinate-nucleotide--dimethylbenzimidazole phosphoribosyltransferase (338 aa).

The active-site Proton acceptor is the glutamate 305.

Belongs to the CobT family.

The enzyme catalyses 5,6-dimethylbenzimidazole + nicotinate beta-D-ribonucleotide = alpha-ribazole 5'-phosphate + nicotinate + H(+). The protein operates within nucleoside biosynthesis; alpha-ribazole biosynthesis; alpha-ribazole from 5,6-dimethylbenzimidazole: step 1/2. Functionally, catalyzes the synthesis of alpha-ribazole-5'-phosphate from nicotinate mononucleotide (NAMN) and 5,6-dimethylbenzimidazole (DMB). In Sinorhizobium medicae (strain WSM419) (Ensifer medicae), this protein is Nicotinate-nucleotide--dimethylbenzimidazole phosphoribosyltransferase.